A 437-amino-acid polypeptide reads, in one-letter code: Serine carboxypeptidase-like 9 (437 aa).

The first 21 residues, 1–21 (MSLILKFMLLILLVSSHHVRS), serve as a signal peptide directing secretion. N-linked (GlcNAc...) asparagine glycosylation occurs at Asn101. Ser175 is an active-site residue. Intrachain disulfides connect Cys243/Cys257 and Cys281/Cys293. N-linked (GlcNAc...) asparagine glycosylation is found at Asn307 and Asn346. Residue Asp362 is part of the active site. A glycan (N-linked (GlcNAc...) asparagine) is linked at Asn378. The active site involves His415.

The protein belongs to the peptidase S10 family. As to expression, expressed in seedlings, leaves, flowers and siliques.

It is found in the secreted. The enzyme catalyses 2 1-O-(trans-sinapoyl)-beta-D-glucose = 1,2-di-O-sinapoyl beta-D-glucose + D-glucose. Catalyzes the formation of 1,2-bis-O-sinapoyl beta-D-glucoside and an unidentified compound 1. The polypeptide is Serine carboxypeptidase-like 9 (SCPL9) (Arabidopsis thaliana (Mouse-ear cress)).